The sequence spans 261 residues: Phosphoribosylaminoimidazole-succinocarboxamide synthase (261 aa).

Belongs to the SAICAR synthetase family.

It carries out the reaction 5-amino-1-(5-phospho-D-ribosyl)imidazole-4-carboxylate + L-aspartate + ATP = (2S)-2-[5-amino-1-(5-phospho-beta-D-ribosyl)imidazole-4-carboxamido]succinate + ADP + phosphate + 2 H(+). It participates in purine metabolism; IMP biosynthesis via de novo pathway; 5-amino-1-(5-phospho-D-ribosyl)imidazole-4-carboxamide from 5-amino-1-(5-phospho-D-ribosyl)imidazole-4-carboxylate: step 1/2. This is Phosphoribosylaminoimidazole-succinocarboxamide synthase from Novosphingobium aromaticivorans (strain ATCC 700278 / DSM 12444 / CCUG 56034 / CIP 105152 / NBRC 16084 / F199).